A 320-amino-acid chain; its full sequence is Adhesin MafA 3 (320 aa).

The first 18 residues, 1-18 (MQARLLIPILFSVFILSA), serve as a signal peptide directing secretion. Residue Cys-19 is the site of N-palmitoyl cysteine attachment. A lipid anchor (S-diacylglycerol cysteine) is attached at Cys-19. Residues 288-298 (HTGNSAPSVET) are compositionally biased toward polar residues. The disordered stretch occupies residues 288 to 320 (HTGNSAPSVETDNSHEGYGYSDEVVRQHRQGQP).

The protein belongs to the MafA family.

The protein localises to the cell outer membrane. This Neisseria meningitidis serogroup C / serotype 2a (strain ATCC 700532 / DSM 15464 / FAM18) protein is Adhesin MafA 3 (mafA3).